The following is a 164-amino-acid chain: Anterior gradient protein 3 (164 aa).

The N-terminal stretch at 1–19 (MYFPMIELTLVLLASSNLA) is a signal peptide. The Prevents secretion from ER motif lies at 161 to 164 (QTEL).

It belongs to the AGR family.

It is found in the endoplasmic reticulum. Its subcellular location is the cytoplasm. In terms of biological role, required for calcium-mediated regulation of ciliary beat frequency in the airway. In Xenopus tropicalis (Western clawed frog), this protein is Anterior gradient protein 3.